A 479-amino-acid chain; its full sequence is Ribosomal RNA small subunit methyltransferase F (479 aa).

Residues Ala-125 to Lys-131, Glu-149, Gly-177, and Asp-194 contribute to the S-adenosyl-L-methionine site. The active-site Nucleophile is Cys-247.

Belongs to the class I-like SAM-binding methyltransferase superfamily. RsmB/NOP family.

The protein resides in the cytoplasm. It carries out the reaction cytidine(1407) in 16S rRNA + S-adenosyl-L-methionine = 5-methylcytidine(1407) in 16S rRNA + S-adenosyl-L-homocysteine + H(+). Specifically methylates the cytosine at position 1407 (m5C1407) of 16S rRNA. The polypeptide is Ribosomal RNA small subunit methyltransferase F (Shigella flexneri serotype 5b (strain 8401)).